The chain runs to 183 residues: uncharacterized protein (183 aa).

The helical transmembrane segment at 7-23 threads the bilayer; it reads LFFTALCFGLTGCIAPP.

The protein resides in the membrane. This is an uncharacterized protein from Haemophilus influenzae (strain ATCC 51907 / DSM 11121 / KW20 / Rd).